The following is a 298-amino-acid chain: Protease HtpX homolog (298 aa).

A run of 2 helical transmembrane segments spans residues 16-36 (VMFG…YLFW) and 38-58 (SWVS…LIMI). H144 provides a ligand contact to Zn(2+). E145 is a catalytic residue. H148 contributes to the Zn(2+) binding site. 2 helical membrane-spanning segments follow: residues 159–179 (IALA…NWFW) and 197–217 (IIGL…ASIA). A Zn(2+)-binding site is contributed by E226.

Belongs to the peptidase M48B family. The cofactor is Zn(2+).

The protein resides in the cell membrane. This is Protease HtpX homolog from Levilactobacillus brevis (strain ATCC 367 / BCRC 12310 / CIP 105137 / JCM 1170 / LMG 11437 / NCIMB 947 / NCTC 947) (Lactobacillus brevis).